The sequence spans 505 residues: SusD-like protein P2 (505 aa).

The signal sequence occupies residues 1 to 17 (MKKYKITFIVLLLTLVG). Cysteine 18 carries the N-palmitoyl cysteine lipid modification. A lipid anchor (S-diacylglycerol cysteine) is attached at cysteine 18.

The protein belongs to the SusD family.

It is found in the cell outer membrane. Polysaccharide-binding protein probably involved in ulvan degradation. Ulvan is the main polysaccharide component of the Ulvales (green seaweed) cell wall. It is composed of disaccharide building blocks comprising 3-sulfated rhamnose (Rha3S) linked to D-glucuronic acid (GlcA), L-iduronic acid (IduA), or D-xylose (Xyl). The SusD-like protein may mediate ulvan oligomer-binding before transport in the periplasm for further degradation. This is SusD-like protein P2 from Formosa agariphila (strain DSM 15362 / KCTC 12365 / LMG 23005 / KMM 3901 / M-2Alg 35-1).